The following is a 680-amino-acid chain: WD repeat-containing protein 48 homolog (680 aa).

WD repeat units follow at residues 26–65 (QHRNGVNALQLDANNGKLYSAGRDAIIRVWNTRTDSSEKY), 71–110 (HHNDWVNDIVLCCNGRNLISASCDTTVKVWNAQKGFCMST), 113–152 (THRDYVQALAYAKDREQVASAGLDKAIFLWDVNTLTALTA), 164–203 (GSKDSIYSLAMNPSGTVIVSGSTENILRIWDPRTCMRSMK), 206–245 (GHTENVRCLVVSPDGNQVVSGSSDGTIKVWNLGQQRCVQT), 248–287 (VHKEGVWSLLMSENFQYIISGSRDRNIIVTEMRNPSNKTL), 290–329 (EEQAPVLSLGYNIDKTGVWATTWNSDIRCWKLPMYDRCTM), and 350–389 (KGGAAIKECAVLNDKRYIITKDSQDQVVVYDVLRVVKKEQ). The tract at residues 592–616 (ETTPSGGNANNSLQNSQSDANSEGS) is disordered.

The protein belongs to the WD repeat WDR48 family. In terms of assembly, catalytic component of the Usp12-46 deubiquitylase complex consisting of Usp12-46, Wdr20 and Uaf1; regulatory subunit that, together wtih Wdr20, stabilizes Usp12-46. The Usp12-46 deubiquitylase complex associates with arr/arrow; the interaction leads to deubiquitination and stabilization of arr/arrow.

Regulatory component of the Usp12-46 deubiquitylase complex. activates deubiquitination by increasing the catalytic turnover without increasing the affinity of deubiquitinating enzymes for the substrate. The complex deubiquitylates the wg/wingless-signaling receptor arr/arrow, which stabilizes the receptor and increases its concentration at the cell surface; this enhances the sensitivity of cells to wg/wingless-signal stimulation. This increases the amplitude and spatial range of the signaling response to the wg/wingless morphogen gradient, facilitating the precise concentration-dependent regulation of its target genes. Together with Wdr20 and Usp12-46 required for wg/wingless-mediated signaling in the wing imaginal disc and for wg/wingless-dependent regulation of intestinal stem cell proliferation. In Drosophila erecta (Fruit fly), this protein is WD repeat-containing protein 48 homolog.